We begin with the raw amino-acid sequence, 744 residues long: 6-phosphofructo-2-kinase/fructose-2,6-bisphosphatase (744 aa).

Disordered regions lie at residues 1–23 and 213–245; these read MGSG…GGQL and RSLS…DGSP. Glycine 2 carries N-myristoyl glycine lipidation. Residues 17 to 122 enclose the CBM20 domain; that stretch reads NGGGGQLYVS…GDARLALFRL (106 aa). A compositionally biased stretch (polar residues) spans 213–232; that stretch reads RSLSASGSFRNDSTPKAAQR. Serine 220 carries the post-translational modification Phosphoserine; by CPK3. Serine 276 and serine 295 each carry phosphoserine. The segment at 301–549 is 6-phosphofructo-2-kinase; it reads SLSASSFLID…VFFLVNTHLT (249 aa). Phosphoserine; by CPK3 is present on serine 303. An ATP-binding site is contributed by 349-357; sequence GLPARGKTF. The beta-D-fructose 6-phosphate site is built by arginine 382 and arginine 406. Aspartate 431 is an active-site residue. Threonine 433 and arginine 439 together coordinate beta-D-fructose 6-phosphate. Cysteine 460 is an active-site residue. Position 469–474 (469–474) interacts with ATP; the sequence is NIRLKI. The beta-D-fructose 6-phosphate site is built by arginine 496 and tyrosine 500. Residues 550 to 744 form a fructose-2,6-bisphosphatase region; that stretch reads PRPILLTRHG…VQEKRYKLMD (195 aa). A beta-D-fructose 2,6-bisphosphate-binding site is contributed by arginine 557. Residue histidine 558 is the Tele-phosphohistidine intermediate of the active site. The beta-D-fructose 2,6-bisphosphate site is built by asparagine 564 and glycine 570. The active-site Proton donor/acceptor is glutamate 630. Residues tyrosine 641, arginine 655, lysine 659, tyrosine 670, glutamine 697, and arginine 701 each coordinate beta-D-fructose 2,6-bisphosphate. Position 652–655 (652–655) interacts with ATP; the sequence is YESR. 697-701 contacts ATP; the sequence is QAVLR.

This sequence in the C-terminal section; belongs to the phosphoglycerate mutase family. In terms of assembly, interacts with 14-3-3 proteins; these interactions may regulate both nitrate assimilation and sucrose/starch partitioning in leaves during the diurnal cycle. Post-translationally, phosphorylation at Ser-220 and Ser-303 by CPK3 promotes 14-3-3 proteins binding.

The protein localises to the membrane. It is found in the cytoplasm. The enzyme catalyses beta-D-fructose 2,6-bisphosphate + H2O = beta-D-fructose 6-phosphate + phosphate. The catalysed reaction is beta-D-fructose 6-phosphate + ATP = beta-D-fructose 2,6-bisphosphate + ADP + H(+). 6-phosphofructo-2-kinase activity is activated by pyruvate. 6-phosphofructo-2-kinase activity is inhibited by PPi, phosphoenolpyruvate and 2-phosphoglycerate. Fructose-2,6-bisphosphatase activity is inhibited by pyruvate, fructose 1,6-bisphosphate and 6-phosphogluconate. Synthesis and degradation of fructose 2,6-bisphosphate. Regulates carbon partitioning between sucrose versus starch during the diurnal cycle. This chain is 6-phosphofructo-2-kinase/fructose-2,6-bisphosphatase (FKFBP), found in Arabidopsis thaliana (Mouse-ear cress).